The chain runs to 363 residues: Elongation factor Tu, chloroplastic (363 aa).

The 189-residue stretch at 1-189 (TLTAAITMAL…NVDEYIPTPE (189 aa)) folds into the tr-type G domain. GTP is bound by residues 55–59 (DCPGH) and 110–113 (NKED).

The protein belongs to the TRAFAC class translation factor GTPase superfamily. Classic translation factor GTPase family. EF-Tu/EF-1A subfamily.

The protein localises to the plastid. The protein resides in the chloroplast. It carries out the reaction GTP + H2O = GDP + phosphate + H(+). Its function is as follows. GTP hydrolase that promotes the GTP-dependent binding of aminoacyl-tRNA to the A-site of ribosomes during protein biosynthesis. The sequence is that of Elongation factor Tu, chloroplastic (tufA) from Gymnochlora stellata.